The following is a 108-amino-acid chain: Small ribosomal subunit protein bS6 (108 aa).

The protein belongs to the bacterial ribosomal protein bS6 family.

Binds together with bS18 to 16S ribosomal RNA. The sequence is that of Small ribosomal subunit protein bS6 from Trichormus variabilis (strain ATCC 29413 / PCC 7937) (Anabaena variabilis).